Reading from the N-terminus, the 270-residue chain is Endochitinase PR4 (270 aa).

The signal sequence occupies residues 1 to 23; the sequence is MGNKLVLVLVAVALVMGPKNVSA. In terms of domain architecture, Chitin-binding type-1 spans 24-58; the sequence is QNCGCAEGLCCSQYGYCGTGEDYCGTGCQQGPCTT. 7 disulfide bridges follow: cysteine 26–cysteine 34, cysteine 28–cysteine 40, cysteine 33–cysteine 47, cysteine 51–cysteine 56, cysteine 88–cysteine 137, cysteine 150–cysteine 160, and cysteine 238–cysteine 270. Glutamate 132 (proton donor) is an active-site residue.

The protein belongs to the glycosyl hydrolase 19 family. Chitinase class I subfamily.

It carries out the reaction Random endo-hydrolysis of N-acetyl-beta-D-glucosaminide (1-&gt;4)-beta-linkages in chitin and chitodextrins.. Its function is as follows. Defense against chitin-containing fungal pathogens. This chain is Endochitinase PR4 (CHI4), found in Phaseolus vulgaris (Kidney bean).